A 377-amino-acid chain; its full sequence is [2-(trimethylamino)ethyl]phosphonate dioxygenase (377 aa).

The disordered stretch occupies residues 95-119 (DTDQSSEVGRTSPDVETWDSSQPAP). N187 contacts [2-(trimethylamino)ethyl]phosphonate. Residue H198 coordinates 2-oxoglutarate. H198 and D200 together coordinate Fe(2+). [2-(trimethylamino)ethyl]phosphonate is bound by residues D200, N201, Y203, N286, and R288. Positions 341, 343, and 352 each coordinate 2-oxoglutarate. H341 is a binding site for Fe(2+).

The protein belongs to the gamma-BBH/TMLD family. In terms of assembly, homodimer. Fe(2+) is required as a cofactor. Requires L-ascorbate as cofactor.

It catalyses the reaction [2-(trimethylamino)ethyl]phosphonate + 2-oxoglutarate + O2 = [(1R)-1-hydroxy-2-(trimethylamino)ethyl]phosphonate + succinate + CO2. Functionally, involved in the degradation of the naturally occurring organophosphonate 2-(trimethylammonio)ethylphosphonate (TMAEP). Catalyzes the hydroxylation of TMAEP to (R)-1-hydroxy-2-(trimethylammonio)ethylphosphonate (OH-TMAEP). Is highly specific for its N-trimethylated substrate. Cannot use gamma-butyrobetaine as substrate. This Leisingera caerulea (Phaeobacter caeruleus) protein is [2-(trimethylamino)ethyl]phosphonate dioxygenase.